A 309-amino-acid polypeptide reads, in one-letter code: Ornithine carbamoyltransferase (309 aa).

Residues 57 to 60, Gln84, Arg108, and 135 to 138 each bind carbamoyl phosphate; these read STRT and HPCQ. Residues Asn166, Asp226, and 230–231 each bind L-ornithine; that span reads SM. Residues 265-266 and Arg293 each bind carbamoyl phosphate; that span reads CL.

It belongs to the aspartate/ornithine carbamoyltransferase superfamily. OTCase family.

The protein resides in the cytoplasm. The catalysed reaction is carbamoyl phosphate + L-ornithine = L-citrulline + phosphate + H(+). It functions in the pathway amino-acid biosynthesis; L-arginine biosynthesis; L-arginine from L-ornithine and carbamoyl phosphate: step 1/3. In terms of biological role, reversibly catalyzes the transfer of the carbamoyl group from carbamoyl phosphate (CP) to the N(epsilon) atom of ornithine (ORN) to produce L-citrulline. The protein is Ornithine carbamoyltransferase of Rhizorhabdus wittichii (strain DSM 6014 / CCUG 31198 / JCM 15750 / NBRC 105917 / EY 4224 / RW1) (Sphingomonas wittichii).